A 2278-amino-acid polypeptide reads, in one-letter code: Protein Ycf2 (2278 aa).

1632–1639 contributes to the ATP binding site; it reads GSIGTGRS.

This sequence belongs to the Ycf2 family.

It localises to the plastid. Its subcellular location is the chloroplast stroma. Functionally, probable ATPase of unknown function. Its presence in a non-photosynthetic plant (Epifagus virginiana) and experiments in tobacco indicate that it has an essential function which is probably not related to photosynthesis. The polypeptide is Protein Ycf2 (Solanum bulbocastanum (Wild potato)).